We begin with the raw amino-acid sequence, 288 residues long: Protease HtpX (288 aa).

Transmembrane regions (helical) follow at residues 5–25 (IALF…VMSL) and 34–54 (SGLL…SLLL). His140 lines the Zn(2+) pocket. The active site involves Glu141. His144 lines the Zn(2+) pocket. 2 helical membrane passes run 155-175 (LLQG…GGII) and 190-210 (FAYF…ATMI). Glu219 serves as a coordination point for Zn(2+).

The protein belongs to the peptidase M48B family. Zn(2+) is required as a cofactor.

It is found in the cell inner membrane. The protein is Protease HtpX of Stenotrophomonas maltophilia (strain R551-3).